The sequence spans 329 residues: Glycerol-3-phosphate dehydrogenase [NAD(P)+] (329 aa).

NADPH is bound by residues Trp-11, Arg-30, and Lys-103. Sn-glycerol 3-phosphate-binding residues include Lys-103, Gly-132, and Ser-134. Ala-136 contributes to the NADPH binding site. Sn-glycerol 3-phosphate contacts are provided by Lys-187, Asp-240, Ser-250, Arg-251, and Asn-252. Lys-187 (proton acceptor) is an active-site residue. Arg-251 contacts NADPH. NADPH is bound by residues Val-275 and Glu-277.

It belongs to the NAD-dependent glycerol-3-phosphate dehydrogenase family.

The protein localises to the cytoplasm. It catalyses the reaction sn-glycerol 3-phosphate + NAD(+) = dihydroxyacetone phosphate + NADH + H(+). The enzyme catalyses sn-glycerol 3-phosphate + NADP(+) = dihydroxyacetone phosphate + NADPH + H(+). Its pathway is membrane lipid metabolism; glycerophospholipid metabolism. Functionally, catalyzes the reduction of the glycolytic intermediate dihydroxyacetone phosphate (DHAP) to sn-glycerol 3-phosphate (G3P), the key precursor for phospholipid synthesis. The sequence is that of Glycerol-3-phosphate dehydrogenase [NAD(P)+] from Nitrosomonas eutropha (strain DSM 101675 / C91 / Nm57).